Reading from the N-terminus, the 233-residue chain is Ribose-5-phosphate isomerase A (233 aa).

Substrate-binding positions include 31–34 (SGST), 87–90 (DGAD), and 100–103 (KGGG). The active-site Proton acceptor is the Glu109. Substrate is bound at residue Lys127.

It belongs to the ribose 5-phosphate isomerase family. As to quaternary structure, homodimer.

The catalysed reaction is aldehydo-D-ribose 5-phosphate = D-ribulose 5-phosphate. It participates in carbohydrate degradation; pentose phosphate pathway; D-ribose 5-phosphate from D-ribulose 5-phosphate (non-oxidative stage): step 1/1. In terms of biological role, catalyzes the reversible conversion of ribose-5-phosphate to ribulose 5-phosphate. The chain is Ribose-5-phosphate isomerase A from Chlamydia felis (strain Fe/C-56) (Chlamydophila felis).